We begin with the raw amino-acid sequence, 760 residues long: uncharacterized protein (760 aa).

The first 20 residues, 1–20, serve as a signal peptide directing secretion; it reads MKFKLFLGSSFFGVATLLIA. The N-palmitoyl cysteine moiety is linked to residue C21. The S-diacylglycerol cysteine moiety is linked to residue C21. Disordered stretches follow at residues 221–243, 272–315, and 705–741; these read ENAANGTTEKAEKTVSASSLQLK, AKTN…TSDD, and IKATSKEGEQNQGKKGDGAQNQGKKGDGAQNGKNDKA. Over residues 272 to 284 the composition is skewed to basic and acidic residues; it reads AKTNGEKGNEKQE. Over residues 300-312 the composition is skewed to polar residues; it reads KNTSQDKTQNTQT. Residues 705-721 are compositionally biased toward basic and acidic residues; it reads IKATSKEGEQNQGKKGD.

It belongs to the MG185/MG260 family.

Its subcellular location is the cell membrane. This is an uncharacterized protein from Mycoplasma pneumoniae (strain ATCC 29342 / M129 / Subtype 1) (Mycoplasmoides pneumoniae).